The following is a 66-amino-acid chain: MSKLKTRSSAAKRFKVTATGKILHKKAGKRHNLSKKSESRKRRLDIPGEIKSVDRWKVERMLPYNL.

Composition is skewed to basic residues over residues 1-15 and 22-43; these read MSKL…KRFK and ILHK…RKRR. Positions 1–43 are disordered; the sequence is MSKLKTRSSAAKRFKVTATGKILHKKAGKRHNLSKKSESRKRR.

It belongs to the bacterial ribosomal protein bL35 family.

The chain is Large ribosomal subunit protein bL35 from Dictyoglomus turgidum (strain DSM 6724 / Z-1310).